Here is a 332-residue protein sequence, read N- to C-terminus: Biotin synthase (332 aa).

A Radical SAM core domain is found at 53–282 (HFGKKVKLNM…TKEIRISGGR (230 aa)). [4Fe-4S] cluster-binding residues include cysteine 71, cysteine 75, and cysteine 78. [2Fe-2S] cluster is bound by residues cysteine 115, cysteine 147, cysteine 207, and arginine 277.

This sequence belongs to the radical SAM superfamily. Biotin synthase family. Homodimer. [4Fe-4S] cluster is required as a cofactor. Requires [2Fe-2S] cluster as cofactor.

It catalyses the reaction (4R,5S)-dethiobiotin + (sulfur carrier)-SH + 2 reduced [2Fe-2S]-[ferredoxin] + 2 S-adenosyl-L-methionine = (sulfur carrier)-H + biotin + 2 5'-deoxyadenosine + 2 L-methionine + 2 oxidized [2Fe-2S]-[ferredoxin]. It functions in the pathway cofactor biosynthesis; biotin biosynthesis; biotin from 7,8-diaminononanoate: step 2/2. Catalyzes the conversion of dethiobiotin (DTB) to biotin by the insertion of a sulfur atom into dethiobiotin via a radical-based mechanism. The chain is Biotin synthase from Bacillus cereus (strain AH187).